Consider the following 930-residue polypeptide: Wings apart-like protein 1 (930 aa).

Residues 540 to 566 (FSPTSMSGSQSSVSGNEPTTSKTRVGS) form a disordered region. Low complexity predominate over residues 541–553 (SPTSMSGSQSSVS). Residues 554 to 566 (GNEPTTSKTRVGS) show a composition bias toward polar residues. Residues 854-909 (KEAEKMIVEAYSALLLAFLSTESRSIRNSIKDYLPKRNLAILVPVLERFVAFHMTL) enclose the WAPL domain.

This sequence belongs to the WAPL family. As to quaternary structure, interacts with the cohesin complex throughout the cell cycle. Expressed in roots, leaves, buds and siliques.

Its subcellular location is the nucleus. The protein localises to the chromosome. Functionally, regulator of sister chromatid cohesion in meiosis which negatively regulates cohesin association with chromatin, acting as an antagonist of CTF7. Cohesion ensures that chromosome partitioning is accurate in both meiotic and mitotic cells and plays an important role in DNA repair. Essential for the prophase removal of cohesin during meiosis thus determining the timely release of meiotic cohesion. Important for proper spindle attachment and assembly during meiosis. Helps to prevent abnormal centromere association during prophase I in meiocytes. Required for early embryonic patterning. Also involved in chromosome segregation during mitosis. The chain is Wings apart-like protein 1 from Arabidopsis thaliana (Mouse-ear cress).